A 747-amino-acid chain; its full sequence is Heterogeneous nuclear ribonucleoprotein U-like protein 2 (747 aa).

One can recognise an SAP domain in the interval 3–37; the sequence is VKRLKVTELRSELQRRGLDSRGLKVDLAQRLQEAL. Disordered regions lie at residues 40 to 242 and 627 to 666; these read EMLE…EEED and EEAR…GQRR. Over residues 73-97 the composition is skewed to acidic residues; sequence GDEEEDEEEEEEDEEALLEDEDEEP. Residues 115 to 125 are compositionally biased toward low complexity; the sequence is EAAAMEAAAEP. The segment covering 137 to 147 has biased composition (gly residues); sequence GSGGVNGGEEQ. The span at 148-163 shows a compositional bias: basic and acidic residues; it reads GLGKREEDEPEERSGD. At S161 the chain carries Phosphoserine. T165 carries the post-translational modification Phosphothreonine. S168, S185, S188, S226, and S228 each carry phosphoserine. Basic and acidic residues predominate over residues 185–223; it reads SEKSKPAGSDGERRGVKRQRDEKDEHGRAYYEFREEAYH. The 194-residue stretch at 226 to 419 folds into the B30.2/SPRY domain; sequence SKSPLPPEEE…VELNFGQKEE (194 aa). Acidic residues predominate over residues 232–242; it reads PEEEAKDEEED. Over residues 627 to 639 the composition is skewed to basic and acidic residues; sequence EEARKLLPPSEKR. Positions 640 to 654 are enriched in basic residues; sequence TNRRNNRNKRNRQNR. R656, R684, R738, and R747 each carry omega-N-methylarginine.

As to quaternary structure, binds to MLF1 and retains it in the nucleus.

The protein localises to the nucleus. This is Heterogeneous nuclear ribonucleoprotein U-like protein 2 (HNRNPUL2) from Homo sapiens (Human).